We begin with the raw amino-acid sequence, 126 residues long: Glycine cleavage system H protein (126 aa).

Residues 23–104 enclose the Lipoyl-binding domain; the sequence is TLTVGITDHA…PYDNWLFKIK (82 aa). Lysine 64 carries the N6-lipoyllysine modification.

It belongs to the GcvH family. As to quaternary structure, the glycine cleavage system is composed of four proteins: P, T, L and H. The cofactor is (R)-lipoate.

Its function is as follows. The glycine cleavage system catalyzes the degradation of glycine. The H protein shuttles the methylamine group of glycine from the P protein to the T protein. The protein is Glycine cleavage system H protein of Paraburkholderia phymatum (strain DSM 17167 / CIP 108236 / LMG 21445 / STM815) (Burkholderia phymatum).